A 538-amino-acid chain; its full sequence is Protein phosphatase EYA2 (538 aa).

Over residues 209–230 (HNVPNQSSESLAGEYNTHNGPS) the composition is skewed to polar residues. A disordered region spans residues 209-263 (HNVPNQSSESLAGEYNTHNGPSTPAKEGDTDRPHRASDGKLRGRSKRSSDPSPAG). Basic and acidic residues predominate over residues 234-249 (KEGDTDRPHRASDGKL). Asp-274 functions as the Nucleophile in the catalytic mechanism. Mg(2+)-binding residues include Asp-274, Asp-276, and Asp-502. Residue Asp-276 is the Proton donor of the active site.

Belongs to the HAD-like hydrolase superfamily. EYA family. In terms of assembly, interacts with DACH2 and SIX1, and probably with SIX2, SIX4 and SIX5. Interacts with CAPN8. Interacts with GNAZ and GNAI2; this precludes interaction with SIX1. Requires Mg(2+) as cofactor. Highest expression in muscle with lower levels in kidney, placenta, pancreas, brain and heart.

The protein resides in the cytoplasm. Its subcellular location is the nucleus. The enzyme catalyses O-phospho-L-tyrosyl-[protein] + H2O = L-tyrosyl-[protein] + phosphate. Its function is as follows. Functions both as protein phosphatase and as transcriptional coactivator for SIX1, and probably also for SIX2, SIX4 and SIX5. Tyrosine phosphatase that dephosphorylates 'Tyr-142' of histone H2AX (H2AXY142ph) and promotes efficient DNA repair via the recruitment of DNA repair complexes containing MDC1. 'Tyr-142' phosphorylation of histone H2AX plays a central role in DNA repair and acts as a mark that distinguishes between apoptotic and repair responses to genotoxic stress. Its function as histone phosphatase may contribute to its function in transcription regulation during organogenesis. Plays an important role in hypaxial muscle development together with SIX1 and DACH2; in this it is functionally redundant with EYA1. This Homo sapiens (Human) protein is Protein phosphatase EYA2 (EYA2).